A 452-amino-acid polypeptide reads, in one-letter code: Protein disulfide-isomerase TMX3 (452 aa).

A signal peptide spans 1 to 26; the sequence is MAAAGLCFILAIVSSTSLLASVPVSA. The Thioredoxin domain occupies 27–128; the sequence is LVEDLDDSFK…KEDIVEFANR (102 aa). At 27-375 the chain is on the lumenal side; sequence LVEDLDDSFK…TVVSVFKSSP (349 aa). Residues cysteine 53 and cysteine 56 each act as nucleophile in the active site. Cysteine 53 and cysteine 56 are joined by a disulfide. 2 N-linked (GlcNAc...) asparagine glycosylation sites follow: asparagine 258 and asparagine 313. Residues 376–396 traverse the membrane as a helical segment; it reads LLGCFLFGLPLGVISIMCYGI. At 397 to 452 the chain is on the cytoplasmic side; it reads CTADTEDGSEEMTRKDVIDQNASDEGSDEEEEKGREITDVSDEDQQEKDFMEKKID. The disordered stretch occupies residues 405–452; it reads SEEMTRKDVIDQNASDEGSDEEEEKGREITDVSDEDQQEKDFMEKKID. Positions 443–452 are enriched in basic and acidic residues; it reads EKDFMEKKID. The Di-lysine motif motif lies at 449 to 452; that stretch reads KKID.

This sequence belongs to the protein disulfide isomerase family.

It localises to the endoplasmic reticulum membrane. It carries out the reaction Catalyzes the rearrangement of -S-S- bonds in proteins.. Functionally, probable disulfide isomerase, which participates in the folding of proteins containing disulfide bonds. May act as a dithiol oxidase. Acts as a regulator of endoplasmic reticulum-mitochondria contact sites via its ability to regulate redox signals. The sequence is that of Protein disulfide-isomerase TMX3 (tmx3) from Xenopus laevis (African clawed frog).